Consider the following 513-residue polypeptide: GMP synthase [glutamine-hydrolyzing] (513 aa).

The region spanning 5–195 (LVLVIDFGGQ…VYNICGCTGD (191 aa)) is the Glutamine amidotransferase type-1 domain. Cys82 functions as the Nucleophile in the catalytic mechanism. Residues His169 and Glu171 contribute to the active site. The region spanning 196-388 (WKMDSFVEKT…LGIPEKLVFR (193 aa)) is the GMPS ATP-PPase domain. An ATP-binding site is contributed by 223–229 (SGGVDSS).

Homodimer.

The enzyme catalyses XMP + L-glutamine + ATP + H2O = GMP + L-glutamate + AMP + diphosphate + 2 H(+). The protein operates within purine metabolism; GMP biosynthesis; GMP from XMP (L-Gln route): step 1/1. Its function is as follows. Catalyzes the synthesis of GMP from XMP. This Clostridium botulinum (strain Eklund 17B / Type B) protein is GMP synthase [glutamine-hydrolyzing].